The sequence spans 233 residues: LexA repressor (233 aa).

The H-T-H motif DNA-binding region spans 26 to 46 (FEEMKEALDLKSKSGVHRLIS). Active-site for autocatalytic cleavage activity residues include Ser-153 and Lys-191.

This sequence belongs to the peptidase S24 family. Homodimer.

It carries out the reaction Hydrolysis of Ala-|-Gly bond in repressor LexA.. In terms of biological role, represses a number of genes involved in the response to DNA damage (SOS response), including recA and lexA. In the presence of single-stranded DNA, RecA interacts with LexA causing an autocatalytic cleavage which disrupts the DNA-binding part of LexA, leading to derepression of the SOS regulon and eventually DNA repair. The chain is LexA repressor from Erythrobacter litoralis (strain HTCC2594).